The sequence spans 173 residues: Large ribosomal subunit protein bL9 (173 aa).

Residues 150–173 (KQEDKKSLSKKLNKADEQGERAEV) form a disordered region.

Belongs to the bacterial ribosomal protein bL9 family.

Its function is as follows. Binds to the 23S rRNA. The chain is Large ribosomal subunit protein bL9 from Borreliella burgdorferi (strain ZS7) (Borrelia burgdorferi).